Reading from the N-terminus, the 297-residue chain is 33 kDa chaperonin (297 aa).

2 disulfides stabilise this stretch: cysteine 232–cysteine 234 and cysteine 266–cysteine 269.

Belongs to the HSP33 family. Post-translationally, under oxidizing conditions two disulfide bonds are formed involving the reactive cysteines. Under reducing conditions zinc is bound to the reactive cysteines and the protein is inactive.

It is found in the cytoplasm. Its function is as follows. Redox regulated molecular chaperone. Protects both thermally unfolding and oxidatively damaged proteins from irreversible aggregation. Plays an important role in the bacterial defense system toward oxidative stress. The sequence is that of 33 kDa chaperonin from Azotobacter vinelandii (strain DJ / ATCC BAA-1303).